The chain runs to 207 residues: Protein-L-isoaspartate O-methyltransferase (207 aa).

Serine 56 is an active-site residue.

The protein belongs to the methyltransferase superfamily. L-isoaspartyl/D-aspartyl protein methyltransferase family.

The protein resides in the cytoplasm. The enzyme catalyses [protein]-L-isoaspartate + S-adenosyl-L-methionine = [protein]-L-isoaspartate alpha-methyl ester + S-adenosyl-L-homocysteine. In terms of biological role, catalyzes the methyl esterification of L-isoaspartyl residues in peptides and proteins that result from spontaneous decomposition of normal L-aspartyl and L-asparaginyl residues. It plays a role in the repair and/or degradation of damaged proteins. The chain is Protein-L-isoaspartate O-methyltransferase from Pyrobaculum neutrophilum (strain DSM 2338 / JCM 9278 / NBRC 100436 / V24Sta) (Thermoproteus neutrophilus).